The following is a 53-amino-acid chain: ATP synthase protein 8 (53 aa).

Residues 4–24 traverse the membrane as a helical segment; sequence MAPISWLLLFIVFSITFILFC.

It belongs to the ATPase protein 8 family. As to quaternary structure, F-type ATPases have 2 components, CF(1) - the catalytic core - and CF(0) - the membrane proton channel.

It is found in the mitochondrion membrane. In terms of biological role, mitochondrial membrane ATP synthase (F(1)F(0) ATP synthase or Complex V) produces ATP from ADP in the presence of a proton gradient across the membrane which is generated by electron transport complexes of the respiratory chain. F-type ATPases consist of two structural domains, F(1) - containing the extramembraneous catalytic core and F(0) - containing the membrane proton channel, linked together by a central stalk and a peripheral stalk. During catalysis, ATP synthesis in the catalytic domain of F(1) is coupled via a rotary mechanism of the central stalk subunits to proton translocation. Part of the complex F(0) domain. Minor subunit located with subunit a in the membrane. The chain is ATP synthase protein 8 (mt:ATPase8) from Drosophila yakuba (Fruit fly).